The following is a 106-amino-acid chain: Nucleoid-associated protein BRADO0764 (106 aa).

The protein belongs to the YbaB/EbfC family. Homodimer.

It is found in the cytoplasm. The protein localises to the nucleoid. Binds to DNA and alters its conformation. May be involved in regulation of gene expression, nucleoid organization and DNA protection. The protein is Nucleoid-associated protein BRADO0764 of Bradyrhizobium sp. (strain ORS 278).